Reading from the N-terminus, the 302-residue chain is NAD kinase 2 (302 aa).

The active-site Proton acceptor is the D78. NAD(+) contacts are provided by residues 78-79 (DG), 152-153 (NE), D182, 193-198 (TAYALS), and A217.

The protein belongs to the NAD kinase family. The cofactor is a divalent metal cation.

It is found in the cytoplasm. It catalyses the reaction NAD(+) + ATP = ADP + NADP(+) + H(+). In terms of biological role, involved in the regulation of the intracellular balance of NAD and NADP, and is a key enzyme in the biosynthesis of NADP. Catalyzes specifically the phosphorylation on 2'-hydroxyl of the adenosine moiety of NAD to yield NADP. The sequence is that of NAD kinase 2 from Parasynechococcus marenigrum (strain WH8102).